We begin with the raw amino-acid sequence, 324 residues long: tRNA U34 carboxymethyltransferase (324 aa).

Carboxy-S-adenosyl-L-methionine is bound by residues K92, W106, K111, G131, 153-155 (DPS), M197, Y201, and R316.

The protein belongs to the class I-like SAM-binding methyltransferase superfamily. CmoB family. As to quaternary structure, homotetramer.

It catalyses the reaction carboxy-S-adenosyl-L-methionine + 5-hydroxyuridine(34) in tRNA = 5-carboxymethoxyuridine(34) in tRNA + S-adenosyl-L-homocysteine + H(+). In terms of biological role, catalyzes carboxymethyl transfer from carboxy-S-adenosyl-L-methionine (Cx-SAM) to 5-hydroxyuridine (ho5U) to form 5-carboxymethoxyuridine (cmo5U) at position 34 in tRNAs. The polypeptide is tRNA U34 carboxymethyltransferase (Hahella chejuensis (strain KCTC 2396)).